The primary structure comprises 168 residues: Cyclic pyranopterin monophosphate synthase (168 aa).

Substrate is bound by residues 81-83 (LCH) and 117-118 (ME). Aspartate 132 is an active-site residue.

The protein belongs to the MoaC family. In terms of assembly, homohexamer; trimer of dimers.

The catalysed reaction is (8S)-3',8-cyclo-7,8-dihydroguanosine 5'-triphosphate = cyclic pyranopterin phosphate + diphosphate. Its pathway is cofactor biosynthesis; molybdopterin biosynthesis. Functionally, catalyzes the conversion of (8S)-3',8-cyclo-7,8-dihydroguanosine 5'-triphosphate to cyclic pyranopterin monophosphate (cPMP). The polypeptide is Cyclic pyranopterin monophosphate synthase (Deinococcus radiodurans (strain ATCC 13939 / DSM 20539 / JCM 16871 / CCUG 27074 / LMG 4051 / NBRC 15346 / NCIMB 9279 / VKM B-1422 / R1)).